Here is a 230-residue protein sequence, read N- to C-terminus: NEDD8-conjugating enzyme Ubc12 (230 aa).

Positions 1–87 are disordered; sequence MFRLKELQKK…AELRAQKDID (87 aa). Over residues 10–20 the composition is skewed to low complexity; sequence KQQQQQQQQQQ. Positions 26–36 are enriched in polar residues; sequence TNGTDAVTTEP. The span at 37 to 57 shows a compositional bias: basic and acidic residues; sequence TDVKRQNSNDLKEIRKQKSKD. Polar residues predominate over residues 61 to 70; sequence SLKTKQSSES. A UBC core domain is found at 77 to 221; that stretch reads PAELRAQKDI…VRQSLRGGYI (145 aa). The active-site Glycyl thioester intermediate is the Cys-159.

This sequence belongs to the ubiquitin-conjugating enzyme family. UBC12 subfamily.

It carries out the reaction [E1 NEDD8-activating enzyme]-S-[NEDD8 protein]-yl-L-cysteine + [E2 NEDD8-conjugating enzyme]-L-cysteine = [E1 NEDD8-activating enzyme]-L-cysteine + [E2 NEDD8-conjugating enzyme]-S-[NEDD8-protein]-yl-L-cysteine.. It participates in protein modification; protein neddylation. Accepts the ubiquitin-like protein nedd8 from the uba3-nae1 E1 complex and catalyzes its covalent attachment to other proteins. This chain is NEDD8-conjugating enzyme Ubc12 (ube2m), found in Dictyostelium discoideum (Social amoeba).